The primary structure comprises 212 residues: Probable nicotinate-nucleotide adenylyltransferase (212 aa).

Belongs to the NadD family.

The catalysed reaction is nicotinate beta-D-ribonucleotide + ATP + H(+) = deamido-NAD(+) + diphosphate. It participates in cofactor biosynthesis; NAD(+) biosynthesis; deamido-NAD(+) from nicotinate D-ribonucleotide: step 1/1. Functionally, catalyzes the reversible adenylation of nicotinate mononucleotide (NaMN) to nicotinic acid adenine dinucleotide (NaAD). In Mycobacterium avium (strain 104), this protein is Probable nicotinate-nucleotide adenylyltransferase.